Reading from the N-terminus, the 592-residue chain is Arginine--tRNA ligase (592 aa).

Positions 129–139 (ANPTGPLHVGH) match the 'HIGH' region motif.

The protein belongs to the class-I aminoacyl-tRNA synthetase family. As to quaternary structure, monomer.

The protein resides in the cytoplasm. It catalyses the reaction tRNA(Arg) + L-arginine + ATP = L-arginyl-tRNA(Arg) + AMP + diphosphate. The protein is Arginine--tRNA ligase of Dichelobacter nodosus (strain VCS1703A).